A 445-amino-acid polypeptide reads, in one-letter code: Meiosis-specific serine/threonine-protein kinase mek1 (445 aa).

Positions 62 to 116 (VSVGRSNTCNYQLLQFTASYKHFRVYSVLIDDDMDPLVYCEDQSSNGTFLNHRLI) constitute an FHA domain. Residues 160-421 (NITQRLLGIG…VKQCLSHPWF (262 aa)) form the Protein kinase domain. ATP-binding positions include 166–174 (LGIGGFSRI) and Lys189. The active-site Proton acceptor is Asp281.

It belongs to the protein kinase superfamily. CAMK Ser/Thr protein kinase family. CHEK2 subfamily.

It catalyses the reaction L-seryl-[protein] + ATP = O-phospho-L-seryl-[protein] + ADP + H(+). The enzyme catalyses L-threonyl-[protein] + ATP = O-phospho-L-threonyl-[protein] + ADP + H(+). Its function is as follows. Probable protein kinase required for meiotic recombination. This Schizosaccharomyces pombe (strain 972 / ATCC 24843) (Fission yeast) protein is Meiosis-specific serine/threonine-protein kinase mek1 (mek1).